Reading from the N-terminus, the 858-residue chain is Taste receptor type 1 member 3 (858 aa).

Residues 1–20 (MPGLAILGLSLAAFLELGMG) form the signal peptide. The Extracellular portion of the chain corresponds to 21–575 (SSLCLSQQFK…FLAWGEPAVL (555 aa)). Residues asparagine 85, asparagine 130, asparagine 203, asparagine 264, asparagine 379, asparagine 387, asparagine 418, asparagine 439, and asparagine 482 are each glycosylated (N-linked (GlcNAc...) asparagine). A helical membrane pass occupies residues 576–596 (SLLLLLCLVLGLTLAALGLFV). Residues 597–610 (HYWDSPLVQASGGS) are Cytoplasmic-facing. A helical membrane pass occupies residues 611–631 (LFCFGLICLGLFCLSVLLFPG). Residues 632 to 644 (RPRSASCLAQQPM) lie on the Extracellular side of the membrane. The chain crosses the membrane as a helical span at residues 645–665 (AHLPLTGCLSTLFLQAAEIFV). Over 666–687 (ESELPLSWANWLCSYLRGPWAW) the chain is Cytoplasmic. A helical membrane pass occupies residues 688–708 (LVVLLATLVEAALCAWYLMAF). The Extracellular portion of the chain corresponds to 709–735 (PPEVVTDWQVLPTEVLEHCRMRSWVSL). Residues 736 to 756 (GLVHITNAVLAFLCFLGTFLV) form a helical membrane-spanning segment. Residues 757-767 (QSQPGRYNRAR) are Cytoplasmic-facing. The chain crosses the membrane as a helical span at residues 768–788 (GLTFAMLAYFIIWVSFVPLLA). Residues 789 to 796 (NVQVAYQP) are Extracellular-facing. Residues 797-817 (AVQMGAILFCALGILATFHLP) form a helical membrane-spanning segment. The Cytoplasmic portion of the chain corresponds to 818–858 (KCYVLLWLPELNTQEFFLGRSPKEASDGNSGSSEATRGHSE). Residues 839 to 858 (PKEASDGNSGSSEATRGHSE) form a disordered region.

It belongs to the G-protein coupled receptor 3 family. TAS1R subfamily. In terms of assembly, forms homodimers or heterodimers with TAS1R1 and TAS1R2.

It localises to the cell membrane. In terms of biological role, putative taste receptor. TAS1R1/TAS1R3 responds to the umami taste stimulus (the taste of monosodium glutamate) and also to most of the 20 standard L-amino acids, but not to their D-enantiomers or other compounds. TAS1R2/TAS1R3 recognizes diverse natural and synthetic sweeteners. TAS1R3 is essential for the recognition and response to the disaccharide trehalose. Sequence differences within and between species can significantly influence the selectivity and specificity of taste responses. This chain is Taste receptor type 1 member 3 (Tas1r3), found in Rattus norvegicus (Rat).